A 218-amino-acid polypeptide reads, in one-letter code: 3,4-dihydroxy-2-butanone 4-phosphate synthase (218 aa).

Residues arginine 38 to glutamate 39, aspartate 43, arginine 151 to threonine 155, and glutamate 175 each bind D-ribulose 5-phosphate. Glutamate 39 serves as a coordination point for Mg(2+). Histidine 154 is a Mg(2+) binding site.

This sequence belongs to the DHBP synthase family. In terms of assembly, homodimer. Requires Mg(2+) as cofactor. It depends on Mn(2+) as a cofactor.

The catalysed reaction is D-ribulose 5-phosphate = (2S)-2-hydroxy-3-oxobutyl phosphate + formate + H(+). The protein operates within cofactor biosynthesis; riboflavin biosynthesis; 2-hydroxy-3-oxobutyl phosphate from D-ribulose 5-phosphate: step 1/1. Catalyzes the conversion of D-ribulose 5-phosphate to formate and 3,4-dihydroxy-2-butanone 4-phosphate. This Vibrio cholerae serotype O1 (strain M66-2) protein is 3,4-dihydroxy-2-butanone 4-phosphate synthase.